The sequence spans 405 residues: Solute carrier family 35 member E2A (405 aa).

A disordered region spans residues 1–22 (MSAAAKSQVPEEAAPGCEEEPK). The next 10 membrane-spanning stretches (helical) occupy residues 76-96 (LIYL…NKYI), 106-126 (MLGA…IFVP), 142-162 (FIMT…LGLV), 167-187 (VAVS…VIMS), 195-215 (TGLL…LCTA), 219-241 (SFNI…QNVF), 264-284 (AAAV…PVIG), 296-316 (IVLL…TAYA), 326-346 (FSVA…IVFG), and 347-367 (NKIT…VLLY). The tract at residues 380 to 405 (SLVTATSRNPEDDTEPLVPQDSRQHH) is disordered.

This sequence belongs to the TPT transporter family. SLC35E subfamily.

It localises to the membrane. Functionally, putative transporter. In Mus musculus (Mouse), this protein is Solute carrier family 35 member E2A (Slc35e2a).